The following is a 116-amino-acid chain: NAD(P)H-quinone oxidoreductase subunit M (116 aa).

Belongs to the complex I NdhM subunit family. In terms of assembly, NDH-1 can be composed of about 15 different subunits; different subcomplexes with different compositions have been identified which probably have different functions.

The protein localises to the cellular thylakoid membrane. It catalyses the reaction a plastoquinone + NADH + (n+1) H(+)(in) = a plastoquinol + NAD(+) + n H(+)(out). The enzyme catalyses a plastoquinone + NADPH + (n+1) H(+)(in) = a plastoquinol + NADP(+) + n H(+)(out). In terms of biological role, NDH-1 shuttles electrons from an unknown electron donor, via FMN and iron-sulfur (Fe-S) centers, to quinones in the respiratory and/or the photosynthetic chain. The immediate electron acceptor for the enzyme in this species is believed to be plastoquinone. Couples the redox reaction to proton translocation, and thus conserves the redox energy in a proton gradient. Cyanobacterial NDH-1 also plays a role in inorganic carbon-concentration. This Synechococcus sp. (strain RCC307) protein is NAD(P)H-quinone oxidoreductase subunit M.